The sequence spans 425 residues: Serine--tRNA ligase (425 aa).

An L-serine-binding site is contributed by 230–232; it reads TAE. ATP is bound at residue 261 to 263; it reads RSE. Glutamate 284 is an L-serine binding site. 348 to 351 contributes to the ATP binding site; it reads EISS. Serine 384 contributes to the L-serine binding site.

The protein belongs to the class-II aminoacyl-tRNA synthetase family. Type-1 seryl-tRNA synthetase subfamily. As to quaternary structure, homodimer. The tRNA molecule binds across the dimer.

The protein localises to the cytoplasm. It catalyses the reaction tRNA(Ser) + L-serine + ATP = L-seryl-tRNA(Ser) + AMP + diphosphate + H(+). The enzyme catalyses tRNA(Sec) + L-serine + ATP = L-seryl-tRNA(Sec) + AMP + diphosphate + H(+). The protein operates within aminoacyl-tRNA biosynthesis; selenocysteinyl-tRNA(Sec) biosynthesis; L-seryl-tRNA(Sec) from L-serine and tRNA(Sec): step 1/1. Catalyzes the attachment of serine to tRNA(Ser). Is also able to aminoacylate tRNA(Sec) with serine, to form the misacylated tRNA L-seryl-tRNA(Sec), which will be further converted into selenocysteinyl-tRNA(Sec). In Streptococcus pyogenes serotype M6 (strain ATCC BAA-946 / MGAS10394), this protein is Serine--tRNA ligase.